We begin with the raw amino-acid sequence, 735 residues long: DNA replication licensing factor mcm5-B (735 aa).

An MCM domain is found at 332–538 (IYETVAKSIA…RDMTLAKHVM (207 aa)). Arg372 provides a ligand contact to ADP. The Arginine finger signature appears at 513–516 (SRFD).

This sequence belongs to the MCM family. As to quaternary structure, component of the mcm2-7 complex (RLF-M). The complex forms a toroidal hexameric ring with the proposed subunit order mcm2-mcm6-mcm4-mcm7-mcm3-mcm5. The heterodimer of mmcm3/mcm5 interacts with mcm4, mmcm6, mcm7 and weakly with mcm2. Component of the CMG helicase complex, composed of the mcm2-7 complex, the GINS complex and cdc45.

Its subcellular location is the nucleus. It is found in the chromosome. It carries out the reaction ATP + H2O = ADP + phosphate + H(+). In terms of biological role, acts as a component of the MCM2-7 complex (MCM complex) which is the replicative helicase essential for 'once per cell cycle' DNA replication initiation and elongation in eukaryotic cells. Core component of CDC45-MCM-GINS (CMG) helicase, the molecular machine that unwinds template DNA during replication, and around which the replisome is built. The active ATPase sites in the MCM2-7 ring are formed through the interaction surfaces of two neighboring subunits such that a critical structure of a conserved arginine finger motif is provided in trans relative to the ATP-binding site of the Walker A box of the adjacent subunit. The six ATPase active sites, however, are likely to contribute differentially to the complex helicase activity. This Xenopus laevis (African clawed frog) protein is DNA replication licensing factor mcm5-B (mcm5-b).